A 956-amino-acid chain; its full sequence is Dual specificity protein kinase YAK1 homolog (956 aa).

One can recognise a Protein kinase domain in the interval tyrosine 122–isoleucine 464. ATP contacts are provided by residues leucine 128–valine 136 and lysine 151. Residue serine 222 is modified to Phosphoserine. The active-site Proton acceptor is aspartate 249. Disordered regions lie at residues leucine 620–proline 657, serine 672–aspartate 781, and glycine 806–alanine 956. Residues threonine 622–leucine 636 are compositionally biased toward polar residues. The span at serine 672 to glycine 691 shows a compositional bias: low complexity. 3 stretches are compositionally biased toward polar residues: residues phenylalanine 697–arginine 713, glutamine 725–alanine 757, and glycine 806–phenylalanine 817. Positions asparagine 818–threonine 830 are enriched in low complexity. Polar residues-rich tracts occupy residues glutamine 838–proline 849, valine 870–glutamine 884, and methionine 902–asparagine 912. Over residues serine 913–serine 924 the composition is skewed to low complexity. Residues asparagine 937–histidine 947 show a composition bias toward polar residues.

The protein belongs to the protein kinase superfamily. Ser/Thr protein kinase family. In terms of processing, autophosphorylated at Ser-222.

The enzyme catalyses L-seryl-[protein] + ATP = O-phospho-L-seryl-[protein] + ADP + H(+). It catalyses the reaction L-threonyl-[protein] + ATP = O-phospho-L-threonyl-[protein] + ADP + H(+). The catalysed reaction is L-tyrosyl-[protein] + ATP = O-phospho-L-tyrosyl-[protein] + ADP + H(+). In terms of biological role, dual specificity protein kinase that phosphorylates ANN1, ANN2 and CP29B at serine and threonine residues, and ANN1, ANN2 and ANN4 at tyrosine residues. May regulate the phosphorylation status of annexin proteins. Acts as a positive regulator in abscisic acid (ABA)-mediated regulation of postgermination growth and drought response. May regulate the expression of ABA-responsive genes such as RD22, RD29A, LTI65/RD29B and RAB18. This is Dual specificity protein kinase YAK1 homolog from Arabidopsis thaliana (Mouse-ear cress).